Here is a 233-residue protein sequence, read N- to C-terminus: Large ribosomal subunit protein uL1 (233 aa).

Belongs to the universal ribosomal protein uL1 family. In terms of assembly, part of the 50S ribosomal subunit.

Binds directly to 23S rRNA. The L1 stalk is quite mobile in the ribosome, and is involved in E site tRNA release. Functionally, protein L1 is also a translational repressor protein, it controls the translation of the L11 operon by binding to its mRNA. The polypeptide is Large ribosomal subunit protein uL1 (Shewanella woodyi (strain ATCC 51908 / MS32)).